A 200-amino-acid chain; its full sequence is Thymidine kinase (200 aa).

ATP-binding positions include 15-22 (GSMFSGKS) and 88-91 (DEVQ). Glu89 acts as the Proton acceptor in catalysis. 4 residues coordinate Zn(2+): Cys145, Cys148, Cys183, and His186.

Belongs to the thymidine kinase family. As to quaternary structure, homotetramer.

It is found in the cytoplasm. The enzyme catalyses thymidine + ATP = dTMP + ADP + H(+). In Bacillus pumilus (strain SAFR-032), this protein is Thymidine kinase.